Here is a 269-residue protein sequence, read N- to C-terminus: Shikimate dehydrogenase (NADP(+)) (269 aa).

Residues 14–16 and threonine 61 each bind shikimate; that span reads SKS. Lysine 65 acts as the Proton acceptor in catalysis. Glutamate 77 contacts NADP(+). Shikimate-binding residues include asparagine 86 and aspartate 102. NADP(+) contacts are provided by residues 126–130, 149–154, and methionine 213; these read GAGGA and NRTLTK. Tyrosine 215 is a shikimate binding site. Residue glycine 238 coordinates NADP(+).

The protein belongs to the shikimate dehydrogenase family. Homodimer.

The enzyme catalyses shikimate + NADP(+) = 3-dehydroshikimate + NADPH + H(+). It participates in metabolic intermediate biosynthesis; chorismate biosynthesis; chorismate from D-erythrose 4-phosphate and phosphoenolpyruvate: step 4/7. Functionally, involved in the biosynthesis of the chorismate, which leads to the biosynthesis of aromatic amino acids. Catalyzes the reversible NADPH linked reduction of 3-dehydroshikimate (DHSA) to yield shikimate (SA). This is Shikimate dehydrogenase (NADP(+)) from Actinobacillus succinogenes (strain ATCC 55618 / DSM 22257 / CCUG 43843 / 130Z).